The following is a 455-amino-acid chain: Aminopeptidase YwaD (455 aa).

An N-terminal signal peptide occupies residues 1-31 (MKKLLTVMTMAVLTAGTLLLPAQSVTPAAHA). Zn(2+) contacts are provided by His250, Asp262, Glu295, Asp323, and His401.

It belongs to the peptidase M28 family. M28B subfamily. In terms of assembly, monomer. The cofactor is Zn(2+).

Its subcellular location is the secreted. It catalyses the reaction Release of N-terminal Arg and Lys from oligopeptides when P1' is not Pro. Also acts on arylamides of Arg and Lys.. It carries out the reaction Release of an N-terminal amino acid, preferentially leucine, but not glutamic or aspartic acids.. In terms of biological role, catalyzes the hydrolysis of a range of N-terminal amino acids. The protein is Aminopeptidase YwaD (ywaD) of Bacillus subtilis (strain 168).